The chain runs to 336 residues: Biotin synthase (336 aa).

One can recognise a Radical SAM core domain in the interval 52-279; it reads KAIQLSTLMS…KSYVRLSAGR (228 aa). [4Fe-4S] cluster contacts are provided by Cys-67, Cys-71, and Cys-74. [2Fe-2S] cluster contacts are provided by Cys-111, Cys-142, Cys-202, and Arg-274.

Belongs to the radical SAM superfamily. Biotin synthase family. Homodimer. The cofactor is [4Fe-4S] cluster. It depends on [2Fe-2S] cluster as a cofactor.

The catalysed reaction is (4R,5S)-dethiobiotin + (sulfur carrier)-SH + 2 reduced [2Fe-2S]-[ferredoxin] + 2 S-adenosyl-L-methionine = (sulfur carrier)-H + biotin + 2 5'-deoxyadenosine + 2 L-methionine + 2 oxidized [2Fe-2S]-[ferredoxin]. The protein operates within cofactor biosynthesis; biotin biosynthesis; biotin from 7,8-diaminononanoate: step 2/2. Its function is as follows. Catalyzes the conversion of dethiobiotin (DTB) to biotin by the insertion of a sulfur atom into dethiobiotin via a radical-based mechanism. The protein is Biotin synthase of Pasteurella multocida (strain Pm70).